A 540-amino-acid polypeptide reads, in one-letter code: MIKLPVLLADINIQSLPTEPELILNNLAITTLVENLIILLLVATLVALVARWLKIPYVIGLVLAGLAIPRGLSVGLNPELILNFFLPILIFEAAINTDISRLRSTIKPITVLAGPGVVISAAITAVLLKIGLGLAWVTAAGVSVILTITDTVSVIAAFRSVPVPRRLATIVEGESMLNDGVAMVLLSVITTIHIQGGFSAGEGIRQIFVAFVGGGLVGLGLGYLCVGLFRQLNDDLSDILLTVSVSLGTFQIGQMLGVSSAIAVVVAGLVIGNLALKQTSASIKVTLLSFWEYAGFGVNTLIFLLVGIEVYPSILLSTIPAALIAIVAYQIGRVFSIYPLLYLLSFFDRPLPLRWQHVLIAGNVKGSLSMALALALPLTLPGRDQVVTLVFSTVMVSLIGQGLSLPWVVKKLQLSKPSPLAQKIAMLQLNLVTAKAAQGELKYLLEAGSLPKFLYEELFADYQARIANSEQELREFYNQRNLIFSEGEVEKKYIDGLYRRLYIAEKSAINDALAKGILADDISDEYLQVLNEKLLALQDD.

Transmembrane regions (helical) follow at residues 29 to 49 (ITTL…VALV), 71 to 91 (GLSV…ILIF), 117 to 137 (VVIS…LAWV), 138 to 158 (TAAG…IAAF), 207 to 227 (IFVA…LCVG), 256 to 276 (LGVS…NLAL), 296 to 316 (FGVN…SILL), 323 to 343 (LIAI…LLYL), 358 to 378 (VLIA…ALPL), and 389 to 409 (LVFS…PWVV).

The protein belongs to the monovalent cation:proton antiporter 1 (CPA1) transporter (TC 2.A.36) family.

The protein resides in the cell membrane. Functionally, required for Na(+) uptake into the cell, especially at low external Na(+) concentrations or low Na(+)/K(+) ratios. May be part of a sodium cycle that permits re-entry of sodium into the cell. This is Na(+)/H(+) antiporter NhaS2 (nhaS2) from Synechocystis sp. (strain ATCC 27184 / PCC 6803 / Kazusa).